The sequence spans 795 residues: Protein translocase subunit SecA 2 (795 aa).

Residues Gln84, 102–106, and Asp496 contribute to the ATP site; that span reads GEGKT.

This sequence belongs to the SecA family. In terms of assembly, monomer and homodimer. Part of the essential Sec protein translocation apparatus which comprises SecA, SecYEG and auxiliary proteins SecDF. Other proteins may also be involved.

The protein resides in the cell membrane. It localises to the cytoplasm. It catalyses the reaction ATP + H2O + cellular proteinSide 1 = ADP + phosphate + cellular proteinSide 2.. Functionally, part of the Sec protein translocase complex. Interacts with the SecYEG preprotein conducting channel. Has a central role in coupling the hydrolysis of ATP to the transfer of proteins into and across the cell membrane, serving as an ATP-driven molecular motor driving the stepwise translocation of polypeptide chains across the membrane. The sequence is that of Protein translocase subunit SecA 2 from Streptococcus agalactiae serotype V (strain ATCC BAA-611 / 2603 V/R).